The primary structure comprises 283 residues: Zinc import ATP-binding protein ZnuC (283 aa).

Positions Val13–Arg228 constitute an ABC transporter domain. Gly45 to Ser52 is an ATP binding site. The interval His264–Gly283 is disordered. Positions Gly272–Gly283 are enriched in gly residues.

Belongs to the ABC transporter superfamily. Zinc importer (TC 3.A.1.15.5) family. The complex is composed of two ATP-binding proteins (ZnuC), two transmembrane proteins (ZnuB) and a solute-binding protein (ZnuA).

It is found in the cell inner membrane. It carries out the reaction Zn(2+)(out) + ATP(in) + H2O(in) = Zn(2+)(in) + ADP(in) + phosphate(in) + H(+)(in). In terms of biological role, part of the ABC transporter complex ZnuABC involved in zinc import. Responsible for energy coupling to the transport system. In Chelativorans sp. (strain BNC1), this protein is Zinc import ATP-binding protein ZnuC.